The sequence spans 664 residues: DNA mismatch repair protein MutL (664 aa).

The tract at residues 382 to 447 (RKAGQEQQLQ…YGEPAPSKQQ (66 aa)) is disordered. A compositionally biased stretch (polar residues) spans 427–436 (RHTTSSNQSE).

This sequence belongs to the DNA mismatch repair MutL/HexB family.

In terms of biological role, this protein is involved in the repair of mismatches in DNA. It is required for dam-dependent methyl-directed DNA mismatch repair. May act as a 'molecular matchmaker', a protein that promotes the formation of a stable complex between two or more DNA-binding proteins in an ATP-dependent manner without itself being part of a final effector complex. The sequence is that of DNA mismatch repair protein MutL from Vibrio vulnificus (strain CMCP6).